The sequence spans 1044 residues: R3H domain-containing protein 2 (1044 aa).

Disordered regions lie at residues 23 to 71 (EESV…AKSN) and 106 to 147 (SCPS…QEYT). The span at 36–56 (PSKEDVEKEGEENGLRQETQR) shows a compositional bias: basic and acidic residues. Ser-37 carries the phosphoserine modification. A compositionally biased stretch (basic residues) spans 58-71 (TSSHGHARKRAKSN). Residues 109–143 (SDKEEEKSTKDVSEKEDKDKSKEKVPRKMLSRDSS) show a composition bias toward basic and acidic residues. Residue Ser-143 is modified to Phosphoserine. Residues 169 to 232 (RMMLLKLEQE…AVIINKTSST (64 aa)) enclose the R3H domain. The SUZ domain maps to 233–303 (RIPEQRFSEH…VRERIFARET (71 aa)). 2 stretches are compositionally biased toward basic and acidic residues: residues 261 to 270 (DASMDRDDNQ) and 277 to 288 (DGRRSKSIEERE). Disordered stretches follow at residues 261–288 (DASM…EERE), 320–408 (SSSS…LSRP), 433–485 (CTAQ…FSPS), 502–533 (MAED…LFQP), 551–600 (GQPL…SNQQ), 729–770 (GTSP…SPSG), and 807–848 (GQKP…SLSN). Over residues 338-349 (SRTSSSRQSSTD) the composition is skewed to low complexity. Phosphoserine occurs at positions 362, 365, and 381. Low complexity predominate over residues 433-449 (CTAQQQQQQQQQQQQLP). 2 stretches are compositionally biased toward polar residues: residues 509 to 521 (PFGQ…QGST) and 554 to 572 (LPTS…QQVL). Low complexity predominate over residues 757 to 770 (PQMSQQYSGVSPSG). A compositionally biased stretch (polar residues) spans 818-848 (GSPQANAQMGSSPVTSPTQSPAPSPVTSLSN). Residues Ser-921 and Ser-923 each carry the phosphoserine modification. 2 positions are modified to phosphothreonine: Thr-924 and Thr-928.

Its subcellular location is the nucleus. This chain is R3H domain-containing protein 2 (R3hdm2), found in Mus musculus (Mouse).